The sequence spans 140 residues: NTF2-related export protein 1 (140 aa).

N-acetylalanine is present on Ala-2. The region spanning 16–135 (AAEEFVNVYY…WKIASDCFRF (120 aa)) is the NTF2 domain.

In terms of assembly, heterodimer with NXF1. Forms a complex with RANGAP1, RANBP2/NUP358 and NXF1. Interacts (via NTF2 domain) with NXF1. Stabilizes the NTF2 domain of NXF1 by heterodimerization. The formation of NXF1-NXT1 heterodimers is required for the NXF1-mediated nuclear mRNA export. Preferentially binds Ran-GTP. Associates with NXF2, NXF3 and NXF5. Does not bind nucleoporins (NPC) directly, its association to NPC is mediated by NXF1.

It is found in the nucleus. It localises to the nucleus speckle. The protein resides in the cytoplasm. Its function is as follows. Stimulator of protein export for NES-containing proteins. Also plays a role in the nuclear export of U1 snRNA, tRNA, and mRNA. The NXF1-NXT1 heterodimer is involved in the export of HSP70 mRNA in conjunction with ALYREF/THOC4 and THOC5. This is NTF2-related export protein 1 (NXT1) from Bos taurus (Bovine).